The chain runs to 518 residues: MPAPSAEVFDRLRNLAAIKDVAARPTRTIDEVFTGKPLTTIPVGTAADVEAAFAEARAAQTDWAKRPVIERAAVIRRYRDLVIENREFLMDLLQAEAGKARWAAQEEIVDLIANANYYARVCVDLLKPRKAQPLLPGIGKTTVCYQPKGVVGVISPWNYPMTLTVSDSVPALVAGNAVVLKPDSQTPYCALACAELLYRAGLPRALYAIVPGPGSVVGTAITDNCDYLMFTGSSATGSRLAEHAGRRLIGFSAELGGKNPMIVARGANLDKVAKAATRACFSNAGQLCISIERIYVEKDIAEEFTRKFGDAVRNMKLGTAYDFSVDMGSLISEAQLKTVSGHVDDATAKGAKVIAGGKARPDIGPLFYEPTVLTNVAPEMECAANETFGPVVSIYPVADVDEAVEKANDTDYGLNASVWAGSTAEGQRIAARLRSGTVNVDEGYAFAWGSLSAPMGGMGLSGVGRRHGPEGLLKYTESQTIATARVFNLDPPFGIPATVWQKSLLPIVRTVMKLPGRR.

Residues 157-158 (WN), 181-184 (KPDS), and 232-233 (GS) each bind NADP(+). The Proton acceptor role is filled by Glu-254. Leu-255 provides a ligand contact to NADP(+). The active-site Nucleophile is the Cys-288. Residue Glu-386 coordinates NADP(+).

It belongs to the aldehyde dehydrogenase family.

The catalysed reaction is succinate semialdehyde + NADP(+) + H2O = succinate + NADPH + 2 H(+). Its function is as follows. Catalyzes the NADP(+)-dependent oxidation of succinate semialdehyde to succinate. Although it has succinate semialdehyde dehydrogenase activity, is likely to act physiologically on a different aldehyde(s). This is Putative succinate-semialdehyde dehydrogenase [NADP(+)] 2 (gabD2) from Mycobacterium bovis (strain ATCC BAA-935 / AF2122/97).